A 419-amino-acid polypeptide reads, in one-letter code: Enolase (419 aa).

Q161 lines the (2R)-2-phosphoglycerate pocket. E205 acts as the Proton donor in catalysis. Mg(2+) is bound by residues D240, E283, and D309. Residues K334, R363, S364, and K385 each coordinate (2R)-2-phosphoglycerate. Catalysis depends on K334, which acts as the Proton acceptor.

It belongs to the enolase family. Requires Mg(2+) as cofactor.

The protein resides in the cytoplasm. It localises to the secreted. Its subcellular location is the cell surface. It catalyses the reaction (2R)-2-phosphoglycerate = phosphoenolpyruvate + H2O. It functions in the pathway carbohydrate degradation; glycolysis; pyruvate from D-glyceraldehyde 3-phosphate: step 4/5. Functionally, catalyzes the reversible conversion of 2-phosphoglycerate (2-PG) into phosphoenolpyruvate (PEP). It is essential for the degradation of carbohydrates via glycolysis. The chain is Enolase from Saccharolobus solfataricus (strain ATCC 35092 / DSM 1617 / JCM 11322 / P2) (Sulfolobus solfataricus).